A 370-amino-acid chain; its full sequence is Phenylalanine dehydrogenase (370 aa).

An NAD(+)-binding site is contributed by arginine 44. Residue lysine 68 coordinates L-phenylalanine. Catalysis depends on lysine 80, which acts as the Proton donor/acceptor. Residue 114–115 (TD) coordinates L-phenylalanine. Residues aspartate 115, serine 146, threonine 150, 180–186 (GLGKVGF), 203–204 (DV), 243–244 (AI), and 264–266 (AAN) contribute to the NAD(+) site. Asparagine 266 serves as a coordination point for L-phenylalanine.

This sequence belongs to the Glu/Leu/Phe/Val dehydrogenases family.

It carries out the reaction L-phenylalanine + NAD(+) + H2O = 3-phenylpyruvate + NH4(+) + NADH + H(+). Its pathway is amino-acid biosynthesis; L-phenylalanine biosynthesis; L-phenylalanine from phenylpyruvate (PDH route): step 1/1. Catalyzes the reversible NAD(+)-dependent oxidative deamination of L-phenylalanine to phenylpyruvate. The chain is Phenylalanine dehydrogenase from Caldalkalibacillus thermarum (strain TA2.A1).